The chain runs to 416 residues: Transmembrane protease serine 11B-like protein (416 aa).

Residues 1–15 (MYRPVIASRKSIPPW) are Cytoplasmic-facing. Residues 16 to 36 (LIILCVLGVLAALGIIIGLLV) form a helical; Signal-anchor for type II membrane protein membrane-spanning segment. The Extracellular portion of the chain corresponds to 37–416 (HFLAVENKIY…RNWIASKTGI (380 aa)). One can recognise an SEA domain in the interval 44–161 (KIYYYQGGFK…GSLKLTEISK (118 aa)). Residue Asn-107 is glycosylated (N-linked (GlcNAc...) asparagine). One can recognise a Peptidase S1 domain in the interval 185-415 (ITGGSTAHKG…YRNWIASKTG (231 aa)). Cysteines 210 and 226 form a disulfide. His-225 serves as the catalytic Charge relay system. Residue Asn-235 is glycosylated (N-linked (GlcNAc...) asparagine). Asp-270 serves as the catalytic Charge relay system. 2 disulfides stabilise this stretch: Cys-335/Cys-351 and Cys-362/Cys-391. Residue Ser-366 is the Charge relay system of the active site.

It belongs to the peptidase S1 family. In terms of tissue distribution, expressed in esophagus, cervix, tongue, and testes.

The protein localises to the cell membrane. With respect to regulation, inhibited by aprotinin, leupeptin, benzamidine, SERPINA1, SPINT1 and SPINT2. In terms of biological role, serine protease. The polypeptide is Transmembrane protease serine 11B-like protein (Tmprss11b) (Mus musculus (Mouse)).